The following is a 342-amino-acid chain: Ferrochelatase (342 aa).

Residues His188 and Glu268 each coordinate Fe cation.

Belongs to the ferrochelatase family.

Its subcellular location is the cytoplasm. The enzyme catalyses heme b + 2 H(+) = protoporphyrin IX + Fe(2+). It participates in porphyrin-containing compound metabolism; protoheme biosynthesis; protoheme from protoporphyrin-IX: step 1/1. In terms of biological role, catalyzes the ferrous insertion into protoporphyrin IX. The chain is Ferrochelatase from Rickettsia typhi (strain ATCC VR-144 / Wilmington).